Reading from the N-terminus, the 427-residue chain is Enolase (427 aa).

A (2R)-2-phosphoglycerate-binding site is contributed by glutamine 163. Residue glutamate 205 is the Proton donor of the active site. Mg(2+) is bound by residues aspartate 242, glutamate 285, and aspartate 312. Residues lysine 337, arginine 366, serine 367, and lysine 388 each contribute to the (2R)-2-phosphoglycerate site. Lysine 337 acts as the Proton acceptor in catalysis.

This sequence belongs to the enolase family. The cofactor is Mg(2+).

It localises to the cytoplasm. The protein resides in the secreted. It is found in the cell surface. It carries out the reaction (2R)-2-phosphoglycerate = phosphoenolpyruvate + H2O. Its pathway is carbohydrate degradation; glycolysis; pyruvate from D-glyceraldehyde 3-phosphate: step 4/5. In terms of biological role, catalyzes the reversible conversion of 2-phosphoglycerate (2-PG) into phosphoenolpyruvate (PEP). It is essential for the degradation of carbohydrates via glycolysis. The protein is Enolase of Rhodopseudomonas palustris (strain ATCC BAA-98 / CGA009).